The following is a 233-amino-acid chain: Ribosomal RNA small subunit methyltransferase G (233 aa).

The segment at 1–25 (MASRQSPMAVSQPDHADRSAALQLT) is disordered. S-adenosyl-L-methionine is bound by residues glycine 85, phenylalanine 90, and arginine 155.

The protein belongs to the methyltransferase superfamily. RNA methyltransferase RsmG family.

It is found in the cytoplasm. The catalysed reaction is guanosine(527) in 16S rRNA + S-adenosyl-L-methionine = N(7)-methylguanosine(527) in 16S rRNA + S-adenosyl-L-homocysteine. Its function is as follows. Specifically methylates the N7 position of guanine in position 527 of 16S rRNA. This is Ribosomal RNA small subunit methyltransferase G from Rhodopseudomonas palustris (strain BisB5).